We begin with the raw amino-acid sequence, 683 residues long: UvrABC system protein B (683 aa).

A Helicase ATP-binding domain is found at 31–414 (AGFEKGYKEQ…ELERTDHKVE (384 aa)). 44–51 (GATGTGKT) serves as a coordination point for ATP. The Beta-hairpin signature appears at 97-120 (YYDYYQPEAYVPQSDTYIEKDSAI). Residues 435–601 (QIDDLVGEIN…TIIKPVHDVI (167 aa)) form the Helicase C-terminal domain. A UVR domain is found at 632–667 (KTMIKNLQEQMKEAAKKLDFEEAANLRDAIMELQSS). Residues 662-683 (MELQSSSRRPKTRKGKALNGKR) form a disordered region. The segment covering 669–683 (RRPKTRKGKALNGKR) has biased composition (basic residues).

The protein belongs to the UvrB family. In terms of assembly, forms a heterotetramer with UvrA during the search for lesions. Interacts with UvrC in an incision complex.

The protein localises to the cytoplasm. Functionally, the UvrABC repair system catalyzes the recognition and processing of DNA lesions. A damage recognition complex composed of 2 UvrA and 2 UvrB subunits scans DNA for abnormalities. Upon binding of the UvrA(2)B(2) complex to a putative damaged site, the DNA wraps around one UvrB monomer. DNA wrap is dependent on ATP binding by UvrB and probably causes local melting of the DNA helix, facilitating insertion of UvrB beta-hairpin between the DNA strands. Then UvrB probes one DNA strand for the presence of a lesion. If a lesion is found the UvrA subunits dissociate and the UvrB-DNA preincision complex is formed. This complex is subsequently bound by UvrC and the second UvrB is released. If no lesion is found, the DNA wraps around the other UvrB subunit that will check the other stand for damage. The sequence is that of UvrABC system protein B from Lactobacillus acidophilus (strain ATCC 700396 / NCK56 / N2 / NCFM).